We begin with the raw amino-acid sequence, 123 residues long: Defensin beta 118 (123 aa).

The N-terminal stretch at 1-19 is a signal peptide; the sequence is MKLLLLALPILVLLPQVIP. Cystine bridges form between cysteine 27–cysteine 54, cysteine 34–cysteine 48, and cysteine 38–cysteine 55. Positions 65-123 are excised as a propeptide; that stretch reads LPTTSPTPLSDSTPGIIDNILTIRFTTDYFEISSKKDMVEESEAGQGTQTSPPNVHHTS. The tract at residues 100-123 is disordered; it reads KDMVEESEAGQGTQTSPPNVHHTS. Residues 109–123 show a composition bias toward polar residues; it reads GQGTQTSPPNVHHTS.

Belongs to the beta-defensin family. In terms of processing, the three-dimensional structure formed by the three intramolecular disulfide bridges is indispensable for antimicrobial activity. In terms of tissue distribution, high-level and epididymis-specific expression. Most abundant in the epithelium of the caput and is also present in the lumen and bound to sperm.

Its subcellular location is the secreted. Functionally, host defense peptide that exhibits antimicrobial activity against both Gram-negative bacteria, such as E.coli and S.typhimurium, and Gram-positive bacteria, such as S.aureus and B.subtilis. Inhibits cell adhesion of E.coli on intestinal epithelial enterocytes. Causes rapid permeabilization of both the outer and inner membrane of E.coli, leading to morphological alterations on the bacterial surface. Binds to bacterial lipopolysaccharides (LPS) with high affinity, and may thereby be involved in immunoregulation through LPS neutralization. May contribute to epididymal innate immunity and protect the sperm against attack by microorganisms. The chain is Defensin beta 118 (DEFB118) from Macaca mulatta (Rhesus macaque).